Consider the following 889-residue polypeptide: Translation initiation factor IF-2 (889 aa).

Positions 115–236 are enriched in basic and acidic residues; that stretch reads EAEAQAKAEA…EAERYSDHHI (122 aa). The tract at residues 115 to 293 is disordered; the sequence is EAEAQAKAEA…RNRSTAPESM (179 aa). The segment covering 257–270 has biased composition (basic residues); sequence GRRARNKNTAKTKR. Over residues 271–280 the composition is skewed to basic and acidic residues; that stretch reads GGKDARDGRE. Positions 389–558 constitute a tr-type G domain; the sequence is PRAPVVTIMG…LLQAEVLELK (170 aa). The interval 398–405 is G1; that stretch reads GHVDHGKT. Residue 398–405 participates in GTP binding; it reads GHVDHGKT. Residues 423-427 are G2; sequence GITQH. Positions 444–447 are G3; the sequence is DTPG. GTP is bound by residues 444–448 and 498–501; these read DTPGH and NKMD. Positions 498–501 are G4; that stretch reads NKMD. The segment at 534 to 536 is G5; sequence SAK.

The protein belongs to the TRAFAC class translation factor GTPase superfamily. Classic translation factor GTPase family. IF-2 subfamily.

It is found in the cytoplasm. Functionally, one of the essential components for the initiation of protein synthesis. Protects formylmethionyl-tRNA from spontaneous hydrolysis and promotes its binding to the 30S ribosomal subunits. Also involved in the hydrolysis of GTP during the formation of the 70S ribosomal complex. The chain is Translation initiation factor IF-2 from Shewanella sp. (strain ANA-3).